The sequence spans 1538 residues: Pentafunctional AROM polypeptide (1538 aa).

A 3-dehydroquinate synthase region spans residues Met1 to Asn384. NAD(+) is bound by residues Asp44 to Asn46, Glu81 to Lys84, Gly114 to Val116, and Asp119. Position 130 (Arg130) interacts with 7-phospho-2-dehydro-3-deoxy-D-arabino-heptonate. Position 139–140 (Thr139–Thr140) interacts with NAD(+). 7-phospho-2-dehydro-3-deoxy-D-arabino-heptonate-binding residues include Asp146 and Lys152. Residue Lys161 coordinates NAD(+). Residue Asn162 participates in 7-phospho-2-dehydro-3-deoxy-D-arabino-heptonate binding. Residues Phe179–Thr182 and Asn190 each bind NAD(+). Glu194 contributes to the Zn(2+) binding site. 7-phospho-2-dehydro-3-deoxy-D-arabino-heptonate contacts are provided by residues Glu194 to Lys197 and Lys250. Glu260 functions as the Proton acceptor; for 3-dehydroquinate synthase activity in the catalytic mechanism. 7-phospho-2-dehydro-3-deoxy-D-arabino-heptonate is bound by residues Arg264 to Asn268 and His271. His271 lines the Zn(2+) pocket. His275 (proton acceptor; for 3-dehydroquinate synthase activity) is an active-site residue. Residues His287 and Lys356 each contribute to the 7-phospho-2-dehydro-3-deoxy-D-arabino-heptonate site. Zn(2+) is bound at residue His287. An EPSP synthase region spans residues Val397–Val842. The For EPSP synthase activity role is filled by Cys824. Residues Ala866–Ser973 form a shikimate kinase region. Gly872–Thr879 contacts ATP. Positions Leu974–Glu1194 are 3-dehydroquinase. His1097 functions as the Proton acceptor; for 3-dehydroquinate dehydratase activity in the catalytic mechanism. Catalysis depends on Lys1125, which acts as the Schiff-base intermediate with substrate; for 3-dehydroquinate dehydratase activity. The tract at residues Ala1207–Ser1538 is shikimate dehydrogenase.

In the N-terminal section; belongs to the sugar phosphate cyclases superfamily. Dehydroquinate synthase family. The protein in the 2nd section; belongs to the EPSP synthase family. It in the 3rd section; belongs to the shikimate kinase family. This sequence in the 4th section; belongs to the type-I 3-dehydroquinase family. In the C-terminal section; belongs to the shikimate dehydrogenase family. In terms of assembly, homodimer. Zn(2+) is required as a cofactor.

The protein localises to the cytoplasm. It catalyses the reaction 7-phospho-2-dehydro-3-deoxy-D-arabino-heptonate = 3-dehydroquinate + phosphate. The catalysed reaction is 3-dehydroquinate = 3-dehydroshikimate + H2O. It carries out the reaction shikimate + NADP(+) = 3-dehydroshikimate + NADPH + H(+). The enzyme catalyses shikimate + ATP = 3-phosphoshikimate + ADP + H(+). It catalyses the reaction 3-phosphoshikimate + phosphoenolpyruvate = 5-O-(1-carboxyvinyl)-3-phosphoshikimate + phosphate. It functions in the pathway metabolic intermediate biosynthesis; chorismate biosynthesis; chorismate from D-erythrose 4-phosphate and phosphoenolpyruvate: step 2/7. It participates in metabolic intermediate biosynthesis; chorismate biosynthesis; chorismate from D-erythrose 4-phosphate and phosphoenolpyruvate: step 3/7. Its pathway is metabolic intermediate biosynthesis; chorismate biosynthesis; chorismate from D-erythrose 4-phosphate and phosphoenolpyruvate: step 4/7. The protein operates within metabolic intermediate biosynthesis; chorismate biosynthesis; chorismate from D-erythrose 4-phosphate and phosphoenolpyruvate: step 5/7. It functions in the pathway metabolic intermediate biosynthesis; chorismate biosynthesis; chorismate from D-erythrose 4-phosphate and phosphoenolpyruvate: step 6/7. The AROM polypeptide catalyzes 5 consecutive enzymatic reactions in prechorismate polyaromatic amino acid biosynthesis. The polypeptide is Pentafunctional AROM polypeptide (Ajellomyces capsulatus (strain NAm1 / WU24) (Darling's disease fungus)).